A 376-amino-acid polypeptide reads, in one-letter code: T-box transcription factor 18 (376 aa).

Residues 38–63 show a composition bias toward low complexity; that stretch reads STSRPSSSSPPSLPAVSSELLSSSFP. Residues 38-76 form a disordered region; that stretch reads STSRPSSSSPPSLPAVSSELLSSSFPTNAPESSSRDLAP. Residues 171–364 constitute a DNA-binding region (T-box); that stretch reads LANQEQWAKF…GNKYCRTDRK (194 aa).

The protein localises to the nucleus. In terms of biological role, transcriptional regulator involved in developmental processes. Directly binds to the promoter region of the sex-determining factor xol-1 to activate its transcription. Its activation of xol-1 transcription controls sex determination and X chromosome dosage compensation to promote male development. Has a role in the fox-1-sex-1-mediated determination of sexual fate. In Caenorhabditis elegans, this protein is T-box transcription factor 18.